Reading from the N-terminus, the 86-residue chain is Small ribosomal subunit protein bS20 (86 aa).

It belongs to the bacterial ribosomal protein bS20 family.

In terms of biological role, binds directly to 16S ribosomal RNA. This chain is Small ribosomal subunit protein bS20, found in Rhodococcus erythropolis (strain PR4 / NBRC 100887).